A 490-amino-acid polypeptide reads, in one-letter code: GTPase Der (490 aa).

EngA-type G domains are found at residues 3–166 and 200–373; these read PVVA…AEAM and IKLA…DSAT. Residues 9–16, 56–60, 118–121, 206–213, 253–257, and 318–321 each bind GTP; these read GRPNVGKS, DTGGI, NKVD, GKPNVGKS, DTAGV, and NKWD. The KH-like domain occupies 374–458; sequence RRVSTSMLTR…PIQLRFQEGG (85 aa).

The protein belongs to the TRAFAC class TrmE-Era-EngA-EngB-Septin-like GTPase superfamily. EngA (Der) GTPase family. As to quaternary structure, associates with the 50S ribosomal subunit.

GTPase that plays an essential role in the late steps of ribosome biogenesis. The polypeptide is GTPase Der (Shewanella halifaxensis (strain HAW-EB4)).